Consider the following 121-residue polypeptide: Spermidine export protein MdtJ (121 aa).

A topological domain (cytoplasmic) is located at residue Met1. A helical transmembrane segment spans residues 2 to 22 (YIYWILLGLAVATEITGTLSM). The Periplasmic segment spans residues 23–31 (KWASVSEGN). A helical membrane pass occupies residues 32-52 (GGFILMLVMISLSYIFLSFAV). Over 53–54 (KK) the chain is Cytoplasmic. The chain crosses the membrane as a helical span at residues 55-75 (IALGVAYALWEGIGILFITLF). At 76-81 (SVLLFD) the chain is on the periplasmic side. The helical transmembrane segment at 82–102 (ESLSLMKIAGLTTLVAGIVLI) threads the bilayer. Residues 103 to 121 (KSGTRKARKPELEVNHGAV) are Cytoplasmic-facing.

It belongs to the drug/metabolite transporter (DMT) superfamily. Small multidrug resistance (SMR) (TC 2.A.7.1) family. MdtJ subfamily. In terms of assembly, forms a complex with MdtI.

It is found in the cell inner membrane. Catalyzes the excretion of spermidine. This Escherichia coli O6:H1 (strain CFT073 / ATCC 700928 / UPEC) protein is Spermidine export protein MdtJ (mdtJ).